Consider the following 698-residue polypeptide: MPSTPYDLVQDDQDLRVPLHAEQAFFHGITFQAKFVGWEEVPRPNTRAEIVQAMRRIRYECKVQNLKKRKVTIHISVNGVRVVLKKRRRKKKNWTNDPEDIELLNHPIYRIFYVSHDSSDLKIFSYIARDASTDTFKCSVFKSHKKSQAMRIVRTVGQAFEVCHKFNLHKNSLEPNDERSDISSSELLDVEQISEQQLSEDGERGGGDNETPKKEHLAITPDLNHTQPQRPNHLDIMPSHSSLRKSNSLLCDVDDKSPGSPSSPRSEITQLKDQLEAQALQTRQALGQLMLVREQLISETNARIEAQARTQQLLQQNRELLEHLASLGAYNEQQTAGLTSANIGMAPQQSQLQMLLQATSNNNNLATINQQISNLGSINQQLTSLSHQLSGLNQQSQHLQNLQQQQQQQQQQQQQQTQAAPTAATPPPAAGGSSPYPSMSALQSISNQLQQQQQQQQQDALSKDLFQVNQELLNRLQALNLNANPGQSQPTPSATAHNSFFYVNPLSCTPATPNNNAGGAGGFNFLTSPAATGTLTPSPLGTMNRNSFAGSSSLNEDIRLSIEQNLNNLEEQLKAAVSNGNLAGLACGGSTSTRDTSRSSSTLDSPSSPRLRSSNNNISPGSSNGNQNHNNNSNSNSSSSRETRFNTVLLRVTDEAGHQRKLSATPSFITRSTSEKVPNRSQMMSQVQRTTWARHTTK.

A PID domain is found at 25–194; the sequence is FFHGITFQAK…SELLDVEQIS (170 aa). The segment at 191–240 is disordered; that stretch reads EQISEQQLSEDGERGGGDNETPKKEHLAITPDLNHTQPQRPNHLDIMPSH. Residues 201–217 show a composition bias toward basic and acidic residues; that stretch reads DGERGGGDNETPKKEHL. Coiled-coil stretches lie at residues 265-327, 379-484, and 554-583; these read RSEI…LASL, NQQL…LNAN, and LNEDIRLSIEQNLNNLEEQLKAAVSNGNLA. A compositionally biased stretch (low complexity) spans 396–423; that stretch reads SQHLQNLQQQQQQQQQQQQQQTQAAPTA. A disordered region spans residues 396–460; sequence SQHLQNLQQQ…QQQQQQQQDA (65 aa). Over residues 436–447 the composition is skewed to polar residues; it reads YPSMSALQSISN. The segment covering 448–458 has biased composition (low complexity); the sequence is QLQQQQQQQQQ. A disordered region spans residues 588-698; the sequence is GGSTSTRDTS…RTTWARHTTK (111 aa). A compositionally biased stretch (low complexity) spans 590–640; that stretch reads STSTRDTSRSSSTLDSPSSPRLRSSNNNISPGSSNGNQNHNNNSNSNSSSS. 2 stretches are compositionally biased toward polar residues: residues 662–672 and 679–698; these read LSATPSFITRS and NRSQMMSQVQRTTWARHTTK.

Expressed at higher level in wing imaginal disk.

Functionally, putative adapter protein. The chain is Capon-like protein from Drosophila melanogaster (Fruit fly).